The sequence spans 163 residues: Probable cobalt-precorrin-6B C(15)-methyltransferase (decarboxylating) (163 aa).

S-adenosyl-L-methionine-binding positions include Thr-6, 30-34 (GCGSG), Asp-51, and Gly-75.

This sequence belongs to the methyltransferase superfamily. Archaeal-type CbiT family.

The catalysed reaction is Co-precorrin-6B + S-adenosyl-L-methionine = Co-precorrin-7 + S-adenosyl-L-homocysteine + CO2. It participates in cofactor biosynthesis; adenosylcobalamin biosynthesis; cob(II)yrinate a,c-diamide from sirohydrochlorin (anaerobic route): step 8/10. Functionally, catalyzes the methylation of C-15 in cobalt-precorrin-6B followed by the decarboxylation of C-12 to form cobalt-precorrin-7. The sequence is that of Probable cobalt-precorrin-6B C(15)-methyltransferase (decarboxylating) from Archaeoglobus fulgidus (strain ATCC 49558 / DSM 4304 / JCM 9628 / NBRC 100126 / VC-16).